The sequence spans 971 residues: Exportin-2 (971 aa).

One can recognise an Importin N-terminal domain in the interval 29–102; it reads AEKFLESVEG…KANIVNLMLS (74 aa).

The protein belongs to the XPO2/CSE1 family. In terms of assembly, interacts with cftr.

Its subcellular location is the cytoplasm. The protein resides in the nucleus. Export receptor for importin alpha. Mediates importin-alpha re-export from the nucleus to the cytoplasm after import substrates have been released into the nucleoplasm. Negatively regulates fluid secretion and plays a role in fluid homeostasis by down-regulating cftr activity. This chain is Exportin-2 (cse1l), found in Pagrus major (Red sea bream).